The following is a 132-amino-acid chain: Iron-sulfur cluster assembly 1 homolog, mitochondrial (132 aa).

Residues 1 to 15 constitute a mitochondrion transit peptide; that stretch reads MASSASSVVRATVRA. Residues Cys60, Cys124, and Cys126 each contribute to the Fe cation site.

Belongs to the HesB/IscA family. In terms of assembly, homooligomer, forming a rod-shaped structure 24 nm in length that may arise through a double-helical assembly of subunits. Interacts with CRY4; CRY4 seems to be associated with the outside of the rod-shaped homooligomer. Does not interact with CRY1 or CRY2. As to expression, detected in retina, especially in the retinal ganglion layer, the inner nuclear layer and the outer nuclear layer. Detected in retina visual pigment cells (at protein level).

It localises to the mitochondrion. Involved in the maturation of mitochondrial 4Fe-4S proteins functioning late in the iron-sulfur cluster assembly pathway. Probably involved in the binding of an intermediate of Fe/S cluster assembly. Component of a putative magnetoreceptor complex formed by ISCA1 and CRY4, a member of the cryptochrome family that are known to be required for light-dependent magnetosensitivity in various orgnisms. The rod-like assembly may facilitate the perception of the Earth's weak magnetic field. Both ISCA1 and the complex with CRY4 have magnetic properties and are attracted to iron beads. When exposed to a magnetic field of 1 mT (superior to the natural magnetic field), over 50% of the rod-like complexes align more or less in parallel with the magnetic field at room temperature. The polypeptide is Iron-sulfur cluster assembly 1 homolog, mitochondrial (ISCA1) (Columba livia (Rock dove)).